The chain runs to 102 residues: Large ribosomal subunit protein uL24 (102 aa).

It belongs to the universal ribosomal protein uL24 family. Part of the 50S ribosomal subunit.

Functionally, one of two assembly initiator proteins, it binds directly to the 5'-end of the 23S rRNA, where it nucleates assembly of the 50S subunit. In terms of biological role, one of the proteins that surrounds the polypeptide exit tunnel on the outside of the subunit. The polypeptide is Large ribosomal subunit protein uL24 (Rhizobium johnstonii (strain DSM 114642 / LMG 32736 / 3841) (Rhizobium leguminosarum bv. viciae)).